A 138-amino-acid chain; its full sequence is ATP synthase epsilon chain (138 aa).

This sequence belongs to the ATPase epsilon chain family. In terms of assembly, F-type ATPases have 2 components, CF(1) - the catalytic core - and CF(0) - the membrane proton channel. CF(1) has five subunits: alpha(3), beta(3), gamma(1), delta(1), epsilon(1). CF(0) has three main subunits: a, b and c.

It is found in the cell membrane. Produces ATP from ADP in the presence of a proton gradient across the membrane. This is ATP synthase epsilon chain from Streptococcus equi subsp. equi (strain 4047).